The sequence spans 293 residues: ATP synthase gamma chain (293 aa).

The protein belongs to the ATPase gamma chain family. As to quaternary structure, F-type ATPases have 2 components, CF(1) - the catalytic core - and CF(0) - the membrane proton channel. CF(1) has five subunits: alpha(3), beta(3), gamma(1), delta(1), epsilon(1). CF(0) has three main subunits: a, b and c.

It is found in the cell inner membrane. Functionally, produces ATP from ADP in the presence of a proton gradient across the membrane. The gamma chain is believed to be important in regulating ATPase activity and the flow of protons through the CF(0) complex. This chain is ATP synthase gamma chain, found in Sinorhizobium fredii (strain NBRC 101917 / NGR234).